Reading from the N-terminus, the 86-residue chain is RNA-binding protein Hfq (86 aa).

The region spanning 9 to 68 is the Sm domain; it reads DPFLNALRRERIPVSIYLVNGIKLQGQIESFDQFVILLKNTVNQMVYKHAISTVVPARPV. Residues 65-86 are disordered; the sequence is ARPVSHHSGERGSDRPSEKSED. Residues 71–86 are compositionally biased toward basic and acidic residues; sequence HSGERGSDRPSEKSED.

It belongs to the Hfq family. Homohexamer.

Its function is as follows. RNA chaperone that binds small regulatory RNA (sRNAs) and mRNAs to facilitate mRNA translational regulation in response to envelope stress, environmental stress and changes in metabolite concentrations. Also binds with high specificity to tRNAs. The protein is RNA-binding protein Hfq of Vibrio vulnificus (strain YJ016).